The chain runs to 60 residues: Large ribosomal subunit protein uL30 (60 aa).

This sequence belongs to the universal ribosomal protein uL30 family. Part of the 50S ribosomal subunit.

This is Large ribosomal subunit protein uL30 from Ligilactobacillus salivarius (strain UCC118) (Lactobacillus salivarius).